Here is an 856-residue protein sequence, read N- to C-terminus: Centrosomal protein of 97 kDa (856 aa).

LRR repeat units lie at residues 37–58, 59–80, 81–102, 103–124, 125–146, 147–168, 171–192, and 196–205; these read DVHT…EKCK, QLIQ…AKLT, QLRV…KDLV, HLEW…NSCT, ALQH…SKLI, SLKT…PAYL, NLSI…SFLA, and ELEQLSIMNN. Positions 211–249 constitute an LRRCT domain; it reads TPSIPGFDYRPFIVSWCLNLRVLDGYVISQKESLKAEWL. The CCP110-binding stretch occupies residues 300 to 742; sequence HQRQLMSQSQ…KCVKDRDSEA (443 aa). 2 positions are modified to phosphoserine: Ser-308 and Ser-410. Residues 430 to 451 form a disordered region; the sequence is DDGADEFTKGLENQDEDKDKEK. The residue at position 497 (Ser-497) is a Phosphoserine. The span at 498–513 shows a compositional bias: polar residues; that stretch reads LTSLPESAGHSASRTE. The disordered stretch occupies residues 498-525; it reads LTSLPESAGHSASRTEANSEEAMSPATS. A Phosphoserine modification is found at Ser-521. A Phosphothreonine modification is found at Thr-534. One can recognise an IQ domain in the interval 550–579; that stretch reads LNAAATKLQACWRGFYTRNYNQQAKGVRYE. The segment at 579–853 is interaction with MPHOSPH9; sequence EIRLRRMQEH…FQGLHVGVTV (275 aa). 2 disordered regions span residues 646 to 672 and 737 to 840; these read PPIS…DQSS and DRDS…PPEC. The span at 737-752 shows a compositional bias: basic and acidic residues; the sequence is DRDSEATAEEHSDCSR. The span at 753–773 shows a compositional bias: polar residues; the sequence is ESSASEQDNTLLQQYLTSVQQ. Ser-755 is modified (phosphoserine). The span at 776–787 shows a compositional bias: acidic residues; sequence DAAEAADSDDVA. The span at 799–811 shows a compositional bias: basic and acidic residues; it reads ERFDASSDSETHR. Over residues 812 to 833 the composition is skewed to polar residues; that stretch reads VASTSQDEISQTPENCQLNEEA.

As to quaternary structure, interacts with CALM1, CEP76, KIF24 and TALPID3. Interacts with CCP110. ENKD1 competes with CEP97 for binding to CCP110, destabilizing the interaction between CP110 and CEP97 which promotes the removal of CCP110 and CEP97 from the mother centriole and allows the initiation of ciliogenesis. Via its interaction with CCP110, may indirectly interact with HERC2 and NEURL4. Interacts with MPHOSPH9.

Its subcellular location is the cytoplasm. It is found in the cytoskeleton. The protein localises to the microtubule organizing center. It localises to the centrosome. The protein resides in the centriole. In terms of biological role, acts as a key negative regulator of ciliogenesis in collaboration with CCP110 by capping the mother centriole thereby preventing cilia formation. Required for recruitment of CCP110 to the centrosome. This is Centrosomal protein of 97 kDa (Cep97) from Mus musculus (Mouse).